Here is a 345-residue protein sequence, read N- to C-terminus: D-fructose 1,6-bisphosphatase class 2/sedoheptulose 1,7-bisphosphatase (345 aa).

Residues Asp33, Glu57, Asp97, and Glu100 each contribute to the Mn(2+) site. Substrate is bound by residues 100-102, Tyr131, 176-178, and 198-200; these read EGT, RDR, and DGD. Mn(2+) is bound at residue Glu225.

Belongs to the FBPase class 2 family. Homotetramer. Mn(2+) is required as a cofactor.

The catalysed reaction is beta-D-fructose 1,6-bisphosphate + H2O = beta-D-fructose 6-phosphate + phosphate. It catalyses the reaction D-sedoheptulose 1,7-bisphosphate + H2O = D-sedoheptulose 7-phosphate + phosphate. It participates in carbohydrate biosynthesis; Calvin cycle. Catalyzes the hydrolysis of fructose 1,6-bisphosphate (Fru 1,6-P2) and sedoheptulose 1,7-bisphosphate (Sed 1,7-P2) to fructose 6-phosphate and sedoheptulose 7-phosphate, respectively. The sequence is that of D-fructose 1,6-bisphosphatase class 2/sedoheptulose 1,7-bisphosphatase from Trichormus variabilis (strain ATCC 29413 / PCC 7937) (Anabaena variabilis).